Consider the following 124-residue polypeptide: MSDTLRRLGEVLESRKLANGGDPEKSYIARLFNKGDDAILKKIGEEATETVMAAKDARAAGMTDEARSKVVYEVADLWFHTMVLLSHFDLTPDDVVGELARREGLSGLEEKALRKLQARDAAGD.

It belongs to the PRA-PH family.

Its subcellular location is the cytoplasm. It carries out the reaction 1-(5-phospho-beta-D-ribosyl)-ATP + H2O = 1-(5-phospho-beta-D-ribosyl)-5'-AMP + diphosphate + H(+). It participates in amino-acid biosynthesis; L-histidine biosynthesis; L-histidine from 5-phospho-alpha-D-ribose 1-diphosphate: step 2/9. This is Phosphoribosyl-ATP pyrophosphatase from Ralstonia pickettii (strain 12J).